Reading from the N-terminus, the 321-residue chain is Isopenicillin N synthase (321 aa).

A disordered region spans residues 1–42; the sequence is MPVLMPSADVPTIDISPQLFGTDPTPRRTSRGRSTRPARGSG. 3 residues coordinate isopenicillin N: Arg-87, Tyr-91, and Tyr-188. 5 residues coordinate N-[(5S)-5-amino-5-carboxypentanoyl]-L-cysteinyl-D-valine: Arg-87, Tyr-91, Tyr-188, His-213, and Asp-215. Residues 179 to 287 form the Fe2OG dioxygenase domain; that stretch reads TLSAVSMIRY…RLSLPFFLHA (109 aa). Fe(2+) contacts are provided by His-213, Asp-215, and His-269. Arg-278 is a binding site for 2-oxoglutarate. Ser-280 is a binding site for isopenicillin N. Ser-280 contacts N-[(5S)-5-amino-5-carboxypentanoyl]-L-cysteinyl-D-valine.

This sequence belongs to the iron/ascorbate-dependent oxidoreductase family. It depends on Fe cation as a cofactor. L-ascorbate is required as a cofactor.

The enzyme catalyses N-[(5S)-5-amino-5-carboxypentanoyl]-L-cysteinyl-D-valine + O2 = isopenicillin N + 2 H2O. The protein operates within antibiotic biosynthesis; penicillin G biosynthesis; penicillin G from L-alpha-aminoadipate and L-cysteine and L-valine: step 2/3. In terms of biological role, removes, in the presence of oxygen, 4 hydrogen atoms from delta-L-(alpha-aminoadipyl)-L-cysteinyl-D-valine (ACV) to form the azetidinone and thiazolidine rings of isopenicillin. The chain is Isopenicillin N synthase (pcbC) from Streptantibioticus cattleyicolor (Streptomyces cattleya).